The primary structure comprises 663 residues: RING finger protein 145 (663 aa).

Transmembrane regions (helical) follow at residues 53–73, 77–97, 123–143, 146–166, 168–188, 205–222, 225–245, 275–295, 316–336, 340–360, 384–404, 410–430, 460–480, and 482–502; these read YLAL…LTLP, LVQL…HQIS, FTTA…VMKT, IWLF…VPLE, IVII…YFLG, LVQV…MSLW, LVVP…QIYS, YSLL…LTLC, TEGV…LQVV, FLLS…MLEI, SLCL…CQFF, LLII…TLFI, LLEF…TIFG, and WTVM…WLRA. The YLYF motif motif lies at 81 to 84; that stretch reads YLYF. Cysteine 537 is an active-site residue. An RING-type; atypical zinc finger spans residues 537-575; it reads CAICYQDMKSAVITPCSHFFHAGCLKKWLYVQETCPLCH. Residues 607–663 form a disordered region; it reads EGTEPPGQEHTPGTRIQEGSRDNNEYIARRPDNQEGAFDPKEYPHSAKDEAHPVESA. Residues 624–663 are compositionally biased toward basic and acidic residues; it reads EGSRDNNEYIARRPDNQEGAFDPKEYPHSAKDEAHPVESA.

Interacts (via YLYF motif) with INSIG1 and INSIG2.

Its subcellular location is the endoplasmic reticulum membrane. It carries out the reaction S-ubiquitinyl-[E2 ubiquitin-conjugating enzyme]-L-cysteine + [acceptor protein]-L-lysine = [E2 ubiquitin-conjugating enzyme]-L-cysteine + N(6)-ubiquitinyl-[acceptor protein]-L-lysine.. In terms of biological role, E3 ubiquitin ligase that catalyzes the direct transfer of ubiquitin from E2 ubiquitin-conjugating enzyme to a specific substrate. In response to bacterial infection, negatively regulates the phagocyte oxidative burst by controlling the turnover of the NADPH oxidase complex subunits. Promotes monoubiquitination of CYBA and 'Lys-48'-linked polyubiquitination and degradation of CYBB NADPH oxidase catalytic subunits, both essential for the generation of antimicrobial reactive oxygen species. Involved in the maintenance of cholesterol homeostasis. In response to high sterol concentrations ubiquitinates HMGCR, a rate-limiting enzyme in cholesterol biosynthesis, and targets it for degradation. The interaction with INSIG1 is required for this function. In addition, triggers ubiquitination of SCAP, likely inhibiting its transport to the Golgi apparatus and the subsequent processing/maturation of SREBPF2, ultimately down-regulating cholesterol biosynthesis. The protein is RING finger protein 145 of Homo sapiens (Human).